The sequence spans 81 residues: Putative CNGA1-overlapping antisense gene protein (81 aa).

Expressed in brain, notably in regions involved in long-term potentiation and long-term depression, such as hippocampal CA1 and CA3, dentate gyrus and cerebellar Purkinje layer.

In Homo sapiens (Human), this protein is Putative CNGA1-overlapping antisense gene protein.